The chain runs to 392 residues: Vascular endothelial growth factor A, long form (392 aa).

Disordered stretches follow at residues 1–44 and 73–174; these read MTDR…VEGV and DKPI…GPGR. The span at 89 to 104 shows a compositional bias: basic and acidic residues; the sequence is PGPEKRGEEEKEEERG. Low complexity-rich tracts occupy residues 121-143 and 158-174; these read AAVCADSAPAARAPQAPARASVP and PRSPSRRGSASRAGPGR. Disulfide bonds link Cys229–Cys271, Cys260–Cys305, and Cys264–Cys307. Asn278 carries N-linked (GlcNAc...) asparagine glycosylation. Residues 309-320 are compositionally biased toward basic and acidic residues; it reads PKKDRTKPEKKS. A disordered region spans residues 309-337; sequence PKKDRTKPEKKSVRGKGKGQKRKRKKSRF. A compositionally biased stretch (basic residues) spans 321-337; sequence VRGKGKGQKRKRKKSRF.

It belongs to the PDGF/VEGF growth factor family. In terms of assembly, homodimer; disulfide-linked. Also found as heterodimer with PGF. Interacts with NRP1. Interacts with isoform 2 of BSG. Interacts with CD82; this interaction inhibits VEGFA-mediated signaling pathway. Produced by use of an alternative upstream CUG codon and post-translationally processed into the N-terminal N-VEGF form and the C-terminal secreted VEGFA form. As to expression, in developing embryos, expressed mainly in the choroid plexus, paraventricular neuroepithelium, placenta and kidney glomeruli. Also found in bronchial epithelium, adrenal gland and in seminiferous tubules of testis. High expression continues in kidney glomeruli and choroid plexus in adults.

The protein localises to the cytoplasm. Its subcellular location is the nucleus. It localises to the secreted. It is found in the endoplasmic reticulum. The protein resides in the golgi apparatus. The protein localises to the extracellular space. Its subcellular location is the extracellular matrix. It localises to the cell membrane. In terms of biological role, participates in the induction of key genes involved in the response to hypoxia and in the induction of angiogenesis such as HIF1A. Involved in protecting cells from hypoxia-mediated cell death. Its function is as follows. Growth factor active in angiogenesis, vasculogenesis and endothelial cell growth. Induces endothelial cell proliferation, promotes cell migration, inhibits apoptosis and induces permeabilization of blood vessels. Binds to the FLT1/VEGFR1 and KDR/VEGFR2 receptors, heparan sulfate and heparin. Binds to the NRP1/neuropilin-1 receptor. Binding to NRP1 receptor initiates a signaling pathway needed for motor neuron axon guidance and cell body migration, including for the caudal migration of facial motor neurons from rhombomere 4 to rhombomere 6 during embryonic development. Also binds the DEAR/FBXW7-AS1 receptor. May play a role in increasing vascular permeability during lactation, when increased transport of molecules from the blood is required for efficient milk protein synthesis. The sequence is that of Vascular endothelial growth factor A, long form (Vegfa) from Mus musculus (Mouse).